A 602-amino-acid chain; its full sequence is Leucine-rich repeat-containing protein 40 (602 aa).

The segment at 1–26 (MSRHMRAPRFDPRAGFHAEGKDRGPS) is disordered. Residues 8–24 (PRFDPRAGFHAEGKDRG) are compositionally biased toward basic and acidic residues. Residues 35-58 (ARSSGQLNLAGRNLGEVPQCVWRI) form an LRR 1 repeat. At serine 71 the chain carries Phosphoserine. 20 LRR repeats span residues 81–103 (QTDL…DLRL), 104–126 (LPAL…AIRE), 127–149 (LDNL…EITS), 150–172 (LKNL…GFEH), 174–195 (SCLE…DFAL), 196–219 (LSSL…ISRM), 221–241 (RLKH…DVGS), 242–266 (MESL…SCRQ), 268–287 (KELH…HLQH), 288–310 (LQAI…EMAL), 311–334 (LQSL…LGNL), 336–356 (LKFL…IIAK), 398–421 (IATL…LFDA), 424–447 (TTLI…IVEL), 449–470 (EMVL…ELCL), 471–494 (LQKL…MSSL), 496–517 (KLQT…LYRI), 519–540 (TLEA…KMKL), 541–564 (MENL…LGNC), and 566–587 (QLRT…ILMK).

The protein is Leucine-rich repeat-containing protein 40 (Lrrc40) of Mus musculus (Mouse).